Here is a 120-residue protein sequence, read N- to C-terminus: Large ribosomal subunit protein bL12 (120 aa).

Belongs to the bacterial ribosomal protein bL12 family. As to quaternary structure, homodimer. Part of the ribosomal stalk of the 50S ribosomal subunit. Forms a multimeric L10(L12)X complex, where L10 forms an elongated spine to which 2 to 4 L12 dimers bind in a sequential fashion. Binds GTP-bound translation factors.

Functionally, forms part of the ribosomal stalk which helps the ribosome interact with GTP-bound translation factors. Is thus essential for accurate translation. The chain is Large ribosomal subunit protein bL12 from Lachnoclostridium phytofermentans (strain ATCC 700394 / DSM 18823 / ISDg) (Clostridium phytofermentans).